The sequence spans 60 residues: DNA-directed RNA polymerase subunit Rpo6 (60 aa).

This sequence belongs to the archaeal Rpo6/eukaryotic RPB6 RNA polymerase subunit family. Part of the RNA polymerase complex.

It localises to the cytoplasm. The catalysed reaction is RNA(n) + a ribonucleoside 5'-triphosphate = RNA(n+1) + diphosphate. Functionally, DNA-dependent RNA polymerase (RNAP) catalyzes the transcription of DNA into RNA using the four ribonucleoside triphosphates as substrates. This Methanothrix thermoacetophila (strain DSM 6194 / JCM 14653 / NBRC 101360 / PT) (Methanosaeta thermophila) protein is DNA-directed RNA polymerase subunit Rpo6.